Here is a 652-residue protein sequence, read N- to C-terminus: Apicoplast pyruvate carrier 2 (652 aa).

Residues 1 to 45 (MSAFPASPQPSAFPASPQPSAFPASPQPSASPVSPRHCVSPSSGT) lie on the Cytoplasmic side of the membrane. Positions 1–53 (MSAFPASPQPSAFPASPQPSAFPASPQPSASPVSPRHCVSPSSGTLPSSSSPS) are disordered. Helical transmembrane passes span 46-66 (LPSS…SSSS), 126-146 (NLLP…AVSY), 167-187 (GTTL…SAWM), 189-209 (LGLA…IAYG), 212-232 (TALG…KLSP), 278-298 (LPYL…SSLN), 345-365 (LVDP…AERQ), 385-405 (SCSA…ICSS), 417-437 (LSWQ…LYPE), 445-465 (AAPA…PRAL), 467-487 (SASR…SLTG), and 515-535 (LWGY…MNAL). At 536–652 (TAPCLFALST…LPYRFPTYSP (117 aa)) the chain is on the cytoplasmic side.

The protein belongs to the major facilitator superfamily. As to quaternary structure, interacts with apicoplast pyruvate carrier 1.

The protein localises to the plastid. It localises to the apicoplast. It is found in the membrane. Along with apicoplast pyruvate carrier 1, forms apicoplast pyruvate carrier (APC) complex, which transports pyruvate into the apicoplast and may also transport amino acids like methionine, serine, glycine and tryptophan with low efficiency. Required for maintaining pyruvate-dependent metabolic activities in the apicoplast, such as synthesis of fatty acids, isopentenyl pyrophosphate (IPP), dimethylallyl pyrophosphate (DMAPP) and methylerythritol 4-phosphate (MEP). Required for maintaining the integrity of the apicoplast. Required for normal parasite growth. The chain is Apicoplast pyruvate carrier 2 from Toxoplasma gondii.